An 894-amino-acid polypeptide reads, in one-letter code: MLSRPSSRFLSTKRGPGPAVKKLIAIGEKWKQKTTRGLPKQDTLNSGSKYILCQFPYPSGALHIGHLRVYVISDSLNRFYKQKGYNVIHPMGWDAFGLPAENAAIERSINPAIWTRDNIAKMKQQMQSMLANFDWDREITTCDPEYYKFTQWIFLKLFENGLAYRKEAEINWDPVDMTVLANEQVDAQGRSWRSGAIVEKKQLKQWFLGITKFAPKLKKHLNQLKDWPSNVKQMQKNWIGESVGAELVFKVADPKFENLIVFTTRPETLFAVQYVALALDHPIVQKYCEEMPDLKEFIQKSDQLPNDTKEGFQLPNIKAVNPLTKEEVPIFAAPYVVSSYGSAPSAVMGCPGHDNRDFEFWQTNCPGEHIKTCIAPFFDDASKVTEQERQRIIDTVPFTSTDGVLTKECGEHSGVLTVVARKSIMGMLNSEGLSKSVVRYKIRDWLISRQRYWGTPIPIIHCDNCGPVPVPESDLPVKLPELEGLDTKGNPLSTIDEFVNVACPSCGSPAKRETDTMDTFIDSSWYYFRFLDPKNTSKPFDREIASKNMPVDIYIGGVEHAILHLLYSRFIAKFLGSINAWSDPAGIFEPFKKLVTQGMVQGKTYVDPDSGKFLKPDELTFVNDSPDGNTVIIKSNGKVPVVSYEKMSKSKYNGADPNECILRHGPDATRAHILFQSPIADALNWDESKIVGIERWLQKVLHLTKNILSLEKDLAISKDYKTPTDLNDAEVKFHNDFQRFLKSITESFEVNLSLNTVISDYMKLTNILESALKKGEVRNEMIVQNLQKLVTVIYPAVPSISEEAAEMINSQMEWNQYRWPEVERTTESKFKKFQIVVNGRVKFMYTADKNFLKLGRDAVIETLMNLPEGRMYLMNKKIKKFVMKFNVISFLFHK.

The transit peptide at 1 to 9 directs the protein to the mitochondrion; it reads MLSRPSSRF. A 'HIGH' region motif is present at residues 56–66; the sequence is PYPSGALHIGH. Positions 646-650 match the 'KMSKS' region motif; sequence KMSKS. Residue Lys649 coordinates ATP.

The protein belongs to the class-I aminoacyl-tRNA synthetase family.

The protein localises to the mitochondrion matrix. The enzyme catalyses tRNA(Leu) + L-leucine + ATP = L-leucyl-tRNA(Leu) + AMP + diphosphate. Catalyzes the attachment of leucine to tRNA(Leu) in the mitochondrion. The sequence is that of Leucine--tRNA ligase, mitochondrial (NAM2) from Saccharomyces cerevisiae (strain ATCC 204508 / S288c) (Baker's yeast).